The following is a 343-amino-acid chain: Mitochondrial import inner membrane translocase subunit TIM50-A (343 aa).

Topologically, residues 1 to 57 are mitochondrial matrix; sequence MHKIVWFGTLNKSIGYIGKKKTCLLSPCEKICLNSARKTVQRCDKNYSPPKLRRIKN. A helical transmembrane segment spans residues 58-77; sequence FYTYSVVLGSLFSIVMWAIY. At 78 to 343 the chain is on the mitochondrial intermembrane side; that stretch reads KLGKPEEDHR…GRSLRGSSIK (266 aa). The FCP1 homology domain occupies 135–278; sequence YIQPPYSLVL…FDLTAFLQLI (144 aa).

Belongs to the TIM50 family. In terms of assembly, component of the TIM23 complex at least composed of Tim23, Tim17 (Tim17a1, Tim17a2 or Tim17b1) and a Tim50. In terms of tissue distribution, exclusively expressed in the testis.

The protein localises to the mitochondrion inner membrane. In terms of biological role, essential component of the TIM23 complex, a complex that mediates the translocation of transit peptide-containing proteins across the mitochondrial inner membrane. The sequence is that of Mitochondrial import inner membrane translocase subunit TIM50-A (ttm3) from Drosophila melanogaster (Fruit fly).